The following is a 98-amino-acid chain: Cystatin-B (98 aa).

At Met-1 the chain carries N-acetylmethionine. Residues 46–50 (QVVAG) carry the Secondary area of contact motif.

It belongs to the cystatin family. As to quaternary structure, able to form dimers stabilized by noncovalent forces.

The protein resides in the cytoplasm. Its subcellular location is the nucleus. Functionally, this is an intracellular thiol proteinase inhibitor. Tightly binding reversible inhibitor of cathepsins L, H and B. The chain is Cystatin-B (CSTB) from Pan troglodytes (Chimpanzee).